Reading from the N-terminus, the 76-residue chain is Large ribosomal subunit protein bL31 (76 aa).

It belongs to the bacterial ribosomal protein bL31 family. Type A subfamily. Part of the 50S ribosomal subunit.

In terms of biological role, binds the 23S rRNA. The chain is Large ribosomal subunit protein bL31 from Beijerinckia indica subsp. indica (strain ATCC 9039 / DSM 1715 / NCIMB 8712).